Here is a 162-residue protein sequence, read N- to C-terminus: Xanthine-guanine phosphoribosyltransferase (162 aa).

5-phospho-alpha-D-ribose 1-diphosphate is bound by residues 43–44 and 94–102; these read RG and DDLVDTGTT. A Mg(2+)-binding site is contributed by D95. Residues D98 and I141 each contribute to the guanine site. 2 residues coordinate xanthine: D98 and I141. GMP is bound by residues 98–102 and 140–141; these read DTGTT and WI.

It belongs to the purine/pyrimidine phosphoribosyltransferase family. XGPT subfamily. Homotetramer. It depends on Mg(2+) as a cofactor.

The protein resides in the cell inner membrane. It catalyses the reaction GMP + diphosphate = guanine + 5-phospho-alpha-D-ribose 1-diphosphate. The enzyme catalyses XMP + diphosphate = xanthine + 5-phospho-alpha-D-ribose 1-diphosphate. The catalysed reaction is IMP + diphosphate = hypoxanthine + 5-phospho-alpha-D-ribose 1-diphosphate. It participates in purine metabolism; GMP biosynthesis via salvage pathway; GMP from guanine: step 1/1. It functions in the pathway purine metabolism; XMP biosynthesis via salvage pathway; XMP from xanthine: step 1/1. Its function is as follows. Purine salvage pathway enzyme that catalyzes the transfer of the ribosyl-5-phosphate group from 5-phospho-alpha-D-ribose 1-diphosphate (PRPP) to the N9 position of the 6-oxopurines guanine and xanthine to form the corresponding ribonucleotides GMP (guanosine 5'-monophosphate) and XMP (xanthosine 5'-monophosphate), with the release of PPi. To a lesser extent, also acts on hypoxanthine. The polypeptide is Xanthine-guanine phosphoribosyltransferase (Oleidesulfovibrio alaskensis (strain ATCC BAA-1058 / DSM 17464 / G20) (Desulfovibrio alaskensis)).